The chain runs to 382 residues: Lipid-A-disaccharide synthase (382 aa).

The protein belongs to the LpxB family.

It catalyses the reaction 2-N,3-O-bis[(3R)-3-hydroxytetradecanoyl]-alpha-D-glucosaminyl 1-phosphate + UDP-2-N,3-O-bis[(3R)-3-hydroxytetradecanoyl]-alpha-D-glucosamine = lipid A disaccharide (E. coli) + UDP + H(+). It carries out the reaction a lipid X + a UDP-2-N,3-O-bis[(3R)-3-hydroxyacyl]-alpha-D-glucosamine = a lipid A disaccharide + UDP + H(+). Its pathway is glycolipid biosynthesis; lipid IV(A) biosynthesis; lipid IV(A) from (3R)-3-hydroxytetradecanoyl-[acyl-carrier-protein] and UDP-N-acetyl-alpha-D-glucosamine: step 5/6. Condensation of UDP-2,3-diacylglucosamine and 2,3-diacylglucosamine-1-phosphate to form lipid A disaccharide, a precursor of lipid A, a phosphorylated glycolipid that anchors the lipopolysaccharide to the outer membrane of the cell. The sequence is that of Lipid-A-disaccharide synthase from Escherichia coli O8 (strain IAI1).